Here is a 485-residue protein sequence, read N- to C-terminus: Otoconin-90 (485 aa).

Positions 1–17 (MIMLLMVGMLMAPCVGA) are cleaved as a signal peptide. An N-linked (GlcNAc...) asparagine glycan is attached at Asn-37. The phospholipase A2-like 1 stretch occupies residues 75 to 189 (LLQFVNSMRC…SLNFLDASFC (115 aa)). Cystine bridges form between Cys-84-Cys-144, Cys-98-Cys-189, Cys-100-Cys-116, Cys-115-Cys-171, Cys-122-Cys-164, Cys-131-Cys-157, and Cys-151-Cys-162. 2 N-linked (GlcNAc...) asparagine glycosylation sites follow: Asn-178 and Asn-288. Phospholipase A2-like regions lie at residues 315–371 (MLQL…QVGC) and 383–435 (CEDH…PVSC). Asn-417 is a glycosylation site (N-linked (GlcNAc...) asparagine). The interval 444–485 (LASSVDSSSEENSEEAPPQMERLRRFLEKPPGPLGARPLGGK) is disordered.

It belongs to the phospholipase A2 family. As to quaternary structure, interacts with OTOL1. In terms of tissue distribution, in the embryo, highly expressed in the developing otocyst with weak expression in the brain. Also expressed in nonsensory epithelia of both the vestibular and cochlear portions of the developing inner ear. Not expressed in adult or embryonic macular sensory epithelia.

The protein resides in the secreted. Functionally, major protein of the otoconia, a calcium carbonate structure in the saccule and utricle of the ear. Together with OTOL1, acts as a scaffold for otoconia biomineralization: sequesters calcium and forms interconnecting fibrils between otoconia that are incorporated into the calcium crystal structure. Together with OTOL1, modulates calcite crystal morphology and growth kinetics. It is unlikely that this protein has phospholipase A2 activity. This Mus musculus (Mouse) protein is Otoconin-90.